A 408-amino-acid polypeptide reads, in one-letter code: Probable serine/threonine-protein kinase PBL16 (408 aa).

A lipid anchor (N-myristoyl glycine) is attached at Gly2. The S-palmitoyl cysteine moiety is linked to residue Cys4. Residues 17 to 50 form a disordered region; it reads ANAKSESPKEQSPTVEDKHIKEVQKLPSNPKEVE. The segment covering 18–30 has biased composition (polar residues); it reads NAKSESPKEQSPT. Positions 31-40 are enriched in basic and acidic residues; that stretch reads VEDKHIKEVQ. Thr65 is modified (phosphothreonine). One can recognise a Protein kinase domain in the interval 76 to 360; it reads FRQDRVLGGG…DIVDSLEPLQ (285 aa). ATP contacts are provided by residues 82–90 and Lys113; that span reads LGGGGFGSV. Residue Tyr159 is modified to Phosphotyrosine. The Proton acceptor role is filled by Asp209. A phosphoserine mark is found at Ser213 and Ser243. 2 positions are modified to phosphothreonine: Thr244 and Thr249. A Phosphotyrosine modification is found at Tyr257.

It belongs to the protein kinase superfamily. Ser/Thr protein kinase family. Post-translationally, palmitoylation at Cys-4 and Cys-6 are required for plasma membrane location.

The protein localises to the cell membrane. It catalyses the reaction L-seryl-[protein] + ATP = O-phospho-L-seryl-[protein] + ADP + H(+). The enzyme catalyses L-threonyl-[protein] + ATP = O-phospho-L-threonyl-[protein] + ADP + H(+). Its function is as follows. May be involved in plant defense signaling. This chain is Probable serine/threonine-protein kinase PBL16, found in Arabidopsis thaliana (Mouse-ear cress).